Consider the following 684-residue polypeptide: Cyclic nucleotide-gated channel alpha-1 (684 aa).

Residues 1–161 (MKTNIINTWH…PSGNTYYNWL (161 aa)) are Cytoplasmic-facing. The interval 34–145 (ACSSFSDDDN…TKEKKEEEKK (112 aa)) is disordered. Positions 39-54 (SDDDNGSLSEESENED) are enriched in acidic residues. The segment covering 105 to 145 (SKADDKNENKKDPEKKKKKEKEKEKKKKEEKTKEKKEEEKK) has biased composition (basic and acidic residues). Residues 162 to 183 (FCITLPVMYNWTMIIARACFDE) traverse the membrane as a helical segment. Residues 184–193 (LQSDYLEYWL) are Extracellular-facing. The helical transmembrane segment at 194–214 (IFDYVSDVVYLADMFVRTRTG) threads the bilayer. Over 215-239 (YLEQGLLVKDRMKLIEKYKANLQFK) the chain is Cytoplasmic. The chain crosses the membrane as a helical span at residues 240 to 258 (LDVLSVIPTDLLYIKFGWN). Topologically, residues 259–263 (YPEIR) are extracellular. Residues 264-282 (LNRLLRISRMFEFFQRTET) form a helical membrane-spanning segment. Topologically, residues 283–289 (RTNYPNI) are cytoplasmic. The tract at residues 287–395 (PNIFRISNLV…GNIGSMISNM (109 aa)) is ion conduction pathway. Residues 290 to 313 (FRISNLVMYIVIIIHWNACVYYSI) form a helical membrane-spanning segment. The Extracellular portion of the chain corresponds to 314-336 (SKAIGFGNDTWVYPDVNDPEFGR). N-linked (GlcNAc...) asparagine glycosylation is present at asparagine 321. A run of 2 helical transmembrane segments spans residues 337-371 (LARK…IFVV) and 372-396 (VDFL…SNMN). Residues 354 to 357 (TIGE) are selectivity filter. Residues 397-473 (AARAEFQSRV…DTLKKVRIFA (77 aa)) form a C-linker region. The Cytoplasmic portion of the chain corresponds to 397-684 (AARAEFQSRV…ESELTESLQD (288 aa)). The interval 477–597 (AGLLVELVLK…EEKGRQILMK (121 aa)) is cyclic nucleotide-binding domain. Positions 537, 540, 553, and 554 each coordinate 3',5'-cyclic GMP. The 3',5'-cyclic AMP site is built by arginine 553 and threonine 554. The stretch at 615–669 (LEEKVTRMEGSVDLLQTRFARILAEYESMQQKLKQRLTKVEKFLKPLIETEFSAL) forms a coiled coil.

The protein belongs to the cyclic nucleotide-gated cation channel (TC 1.A.1.5) family. CNGA1 subfamily. As to quaternary structure, forms heterotetrameric channels composed of CNGA1 and CNGB1 subunits with 3:1 stoichiometry. May also form cyclic nucleotide-activated homotetrameric channels, that are efficiently activated by saturating cGMP, but poorly activated by saturating cAMP compared to the heterotetramer with CNGB1. The channel binds Ca(2+)-bound CALM1 via CaM1 and CaM2 regions of the CNGB1 subunit; this interaction modulates the affinity of the channel for cNMPs in response to intracellular Ca(2+) levels. As to expression, rod cells in the retina and inner medulla of kidney.

Its subcellular location is the cell membrane. It catalyses the reaction Ca(2+)(in) = Ca(2+)(out). The catalysed reaction is Na(+)(in) = Na(+)(out). It carries out the reaction K(+)(in) = K(+)(out). The enzyme catalyses NH4(+)(in) = NH4(+)(out). It catalyses the reaction Rb(+)(in) = Rb(+)(out). The catalysed reaction is Li(+)(in) = Li(+)(out). It carries out the reaction Cs(+)(in) = Cs(+)(out). Pore-forming subunit of the rod cyclic nucleotide-gated channel. Mediates rod photoresponses at dim light converting transient changes in intracellular cGMP levels into electrical signals. In the dark, cGMP levels are high and keep the channel open enabling a steady inward current carried by Na(+) and Ca(2+) ions that leads to membrane depolarization and neurotransmitter release from synaptic terminals. Upon photon absorption cGMP levels decline leading to channel closure and membrane hyperpolarization that ultimately slows neurotransmitter release and signals the presence of light, the end point of the phototransduction cascade. Conducts cGMP- and cAMP-gated ion currents, with permeability for monovalent and divalent cations. The selectivity for Ca(2+) over Na(+) increases with cGMP concentrations, whereas the selectivity among monovalent ions is independent of the cGMP levels. The polypeptide is Cyclic nucleotide-gated channel alpha-1 (Cnga1) (Mus musculus (Mouse)).